Consider the following 359-residue polypeptide: 3-dehydroquinate synthase (359 aa).

NAD(+)-binding positions include 71–76, 105–109, 129–130, K142, K151, and 169–172; these read DGEQYK, GVIGD, TT, and CLST. Zn(2+)-binding residues include E184, H247, and H264.

Belongs to the sugar phosphate cyclases superfamily. Dehydroquinate synthase family. Co(2+) is required as a cofactor. It depends on Zn(2+) as a cofactor. The cofactor is NAD(+).

The protein resides in the cytoplasm. It catalyses the reaction 7-phospho-2-dehydro-3-deoxy-D-arabino-heptonate = 3-dehydroquinate + phosphate. It functions in the pathway metabolic intermediate biosynthesis; chorismate biosynthesis; chorismate from D-erythrose 4-phosphate and phosphoenolpyruvate: step 2/7. Its function is as follows. Catalyzes the conversion of 3-deoxy-D-arabino-heptulosonate 7-phosphate (DAHP) to dehydroquinate (DHQ). This chain is 3-dehydroquinate synthase, found in Shewanella pealeana (strain ATCC 700345 / ANG-SQ1).